Consider the following 188-residue polypeptide: Transmembrane protein 160 (188 aa).

The transit peptide at methionine 1–arginine 96 directs the protein to the mitochondrion. The tract at residues proline 24–valine 52 is disordered. Serine 48 carries the post-translational modification Phosphoserine. A run of 2 helical transmembrane segments spans residues phenylalanine 102–alanine 122 and alanine 135–leucine 155. Positions proline 168 to glutamate 188 are disordered.

This sequence belongs to the TMEM160 family.

The protein localises to the mitochondrion inner membrane. In Homo sapiens (Human), this protein is Transmembrane protein 160.